A 79-amino-acid chain; its full sequence is uncharacterized protein (79 aa).

The N-terminal stretch at Met1–Ala19 is a signal peptide. Residues Arg52–Ser71 are disordered. The segment covering Thr58 to Ser71 has biased composition (polar residues).

In terms of tissue distribution, nacreous layer of shell (at protein level). Expressed primarily in the mantle with highest level in the mantle pallium and lower level in the mantle edge.

The protein localises to the secreted. This is an uncharacterized protein from Margaritifera margaritifera (Freshwater pearl mussel).